The primary structure comprises 188 residues: Diphosphoinositol polyphosphate phosphohydrolase DDP1 (188 aa).

Residues M1 to E21 are compositionally biased toward basic and acidic residues. The disordered stretch occupies residues M1–Q23. The Nudix hydrolase domain occupies G30–N179. 1D-myo-inositol hexakisphosphate-binding residues include R32, S52, S53, and K63. Residues R32, S52, S53, and K63 each contribute to the 5-diphospho-1D-myo-inositol 1,2,3,4,6-pentakisphosphate site. P(1),P(5)-bis(5'-adenosyl) pentaphosphate contacts are provided by R32, S52, S53, and K63. 3 residues coordinate Mg(2+): K63, E80, and E84. A Nudix box motif is present at residues G65 to G86. D100 provides a ligand contact to P(1),P(5)-bis(5'-adenosyl) pentaphosphate. 4 residues coordinate 1D-myo-inositol hexakisphosphate: R102, R129, R152, and R171. Residue R102 coordinates 5-diphospho-1D-myo-inositol 1,2,3,4,6-pentakisphosphate. Residues R152 and R171 each contribute to the 5-diphospho-1D-myo-inositol 1,2,3,4,6-pentakisphosphate site. P(1),P(5)-bis(5'-adenosyl) pentaphosphate is bound by residues R152, R171, and E173.

The protein belongs to the Nudix hydrolase family. DIPP subfamily. The cofactor is Mg(2+). Requires Mn(2+) as cofactor. It depends on Zn(2+) as a cofactor.

The protein localises to the cytoplasm. The protein resides in the nucleus. It carries out the reaction diphospho-myo-inositol polyphosphate + H2O = myo-inositol polyphosphate + phosphate.. The catalysed reaction is P(1),P(6)-bis(5'-adenosyl) hexaphosphate + H2O = adenosine 5'-pentaphosphate + AMP + 2 H(+). The enzyme catalyses P(1),P(5)-bis(5'-adenosyl) pentaphosphate + H2O = adenosine 5'-tetraphosphate + AMP + 2 H(+). It catalyses the reaction [phosphate](n+1) + n H2O = (n+1) phosphate + n H(+). In terms of biological role, may eliminate potentially toxic dinucleoside polyphosphates during sporulation. Most active against diadenosine 5',5'''-P1,P6-hexaphosphate (Ap6A). Can also hydrolyze diadenosine 5',5'''-P1,P5-pentaphosphate (Ap5A), adenosine 5'-pentaphosphate (p5A), and adenosine 5'-tetraphosphate (p4A) are also substrates, but not diadenosine 5',5'''-P1,P4-tetraphosphate (Ap4A) or other dinucleotides, mononucleotides, nucleotide sugars, or nucleotide alcohols. Also cleaves a beta-phosphate from the diphosphate groups in PP-InsP5 (diphosphoinositol pentakisphosphate) and [PP]2-InsP4 (bisdiphosphoinositol tetrakisphosphate). Also has endopolyphosphatase activity. This chain is Diphosphoinositol polyphosphate phosphohydrolase DDP1 (DDP1), found in Saccharomyces cerevisiae (strain ATCC 204508 / S288c) (Baker's yeast).